A 399-amino-acid chain; its full sequence is MLNRVKLEIKDPMDWNTMYQESEIYSGIHNMNNGLPSNSFLPTDVSTVPTSMPYMSNGLSGPVTSIQGNLGSLGSMTQGMVGSLAPPASTPAYPMGYCQGESEFQRDPRTYRRNYSHAKPPYSYISLITMAIQQAPNKMMTLNEIYQWIIDLFPYYRQNQQRWQNSIRHSLSFNDCFVKVPRSPEKPGKGSYWTLHPESGNMFENGCYLRRQKRFKCERSKSGEREKKVNKPGDENGGSLKETPVGYDDCSSSRSPQAPVNDGGRDSTGSSIHQASGGSPVGLSPTSEQAGTASQLMYPLGLSNDGYLGLVGEDVHLKHDPFSGRHPFSITQLMSSEQDQTYPSKLEMCPTTDHLVHYSNYSSDYHNMASKNGLDMQTSSSTDNGYYANMYSRPILSSL.

The fork-head DNA-binding region spans 119 to 213 (KPPYSYISLI…ENGCYLRRQK (95 aa)). Basic and acidic residues predominate over residues 219-234 (RSKSGEREKKVNKPGD). The tract at residues 219-290 (RSKSGEREKK…VGLSPTSEQA (72 aa)) is disordered. Over residues 267 to 277 (STGSSIHQASG) the composition is skewed to polar residues.

The protein resides in the nucleus. Its function is as follows. Transcriptional repressor involved in embryonic nervous system development. Plays a role in the induction and patterning of the anterior-posterior neural axis. Involved in the establishment of floor plate differentiation from neural plate cells during gastrulation. Binds the anf1 promoter sequence to restrict expression of anf1 to the anterior of the neural plate, thereby patterning the forebrain. Can bind to the HNF-3-alpha DNA target sequence. Cooperates with t/bra in a dose-dependent manner to specify dorsal mesoderm formation, including notochord. May be involved in the dorso-ventral patterning of the mesoderm. Binds to DNA via the target sequence 5'-[GA]TAAA[TC]A-3', with 5'-GTAAATA-3' being the preferred binding site. The protein is Forkhead box protein A4 of Xenopus tropicalis (Western clawed frog).